The sequence spans 206 residues: Superoxide dismutase [Mn] (206 aa).

His-27, His-82, Asp-168, and His-172 together coordinate Mn(2+).

This sequence belongs to the iron/manganese superoxide dismutase family. As to quaternary structure, homodimer. Mn(2+) is required as a cofactor.

It carries out the reaction 2 superoxide + 2 H(+) = H2O2 + O2. In terms of biological role, destroys superoxide anion radicals which are normally produced within the cells and which are toxic to biological systems. This is Superoxide dismutase [Mn] (sodA) from Escherichia coli (strain K12).